Consider the following 46-residue polypeptide: Large ribosomal subunit protein bL34c (46 aa).

It belongs to the bacterial ribosomal protein bL34 family.

It localises to the plastid. Its subcellular location is the chloroplast. The chain is Large ribosomal subunit protein bL34c (rpl34) from Guillardia theta (Cryptophyte).